We begin with the raw amino-acid sequence, 256 residues long: Ubiquinone/menaquinone biosynthesis C-methyltransferase UbiE (256 aa).

The span at 1–12 (MNDQRKGDHAEP) shows a compositional bias: basic and acidic residues. A disordered region spans residues 1–23 (MNDQRKGDHAEPTTHFGYQDVPE). Residues Thr-79, Asp-100, and 128–129 (DA) each bind S-adenosyl-L-methionine.

Belongs to the class I-like SAM-binding methyltransferase superfamily. MenG/UbiE family.

The catalysed reaction is a 2-demethylmenaquinol + S-adenosyl-L-methionine = a menaquinol + S-adenosyl-L-homocysteine + H(+). It catalyses the reaction a 2-methoxy-6-(all-trans-polyprenyl)benzene-1,4-diol + S-adenosyl-L-methionine = a 5-methoxy-2-methyl-3-(all-trans-polyprenyl)benzene-1,4-diol + S-adenosyl-L-homocysteine + H(+). It functions in the pathway quinol/quinone metabolism; menaquinone biosynthesis; menaquinol from 1,4-dihydroxy-2-naphthoate: step 2/2. It participates in cofactor biosynthesis; ubiquinone biosynthesis. Its function is as follows. Methyltransferase required for the conversion of demethylmenaquinol (DMKH2) to menaquinol (MKH2) and the conversion of 2-polyprenyl-6-methoxy-1,4-benzoquinol (DDMQH2) to 2-polyprenyl-3-methyl-6-methoxy-1,4-benzoquinol (DMQH2). In Pseudomonas putida (strain ATCC 700007 / DSM 6899 / JCM 31910 / BCRC 17059 / LMG 24140 / F1), this protein is Ubiquinone/menaquinone biosynthesis C-methyltransferase UbiE.